The chain runs to 83 residues: Small ribosomal subunit protein bS16 (83 aa).

It belongs to the bacterial ribosomal protein bS16 family.

The chain is Small ribosomal subunit protein bS16 from Azoarcus sp. (strain BH72).